Here is a 453-residue protein sequence, read N- to C-terminus: GTPase Der (453 aa).

EngA-type G domains are found at residues 4–169 (PIVA…PTQG) and 177–352 (TKIA…NEYQ). Residues 10-17 (GRPNVGKS), 57-61 (DTGGL), 120-123 (NKCE), 183-190 (GRPNVGKS), 230-234 (DTAGI), and 295-298 (NKWD) each bind GTP. The region spanning 353–438 (RRVTTSVINE…PIRLLWRGKK (86 aa)) is the KH-like domain.

Belongs to the TRAFAC class TrmE-Era-EngA-EngB-Septin-like GTPase superfamily. EngA (Der) GTPase family. In terms of assembly, associates with the 50S ribosomal subunit.

In terms of biological role, GTPase that plays an essential role in the late steps of ribosome biogenesis. The protein is GTPase Der of Trichodesmium erythraeum (strain IMS101).